Reading from the N-terminus, the 63-residue chain is Large ribosomal subunit protein bL33m (63 aa).

It belongs to the bacterial ribosomal protein bL33 family.

It localises to the mitochondrion. This is Large ribosomal subunit protein bL33m (mrpl33) from Dictyostelium discoideum (Social amoeba).